A 308-amino-acid chain; its full sequence is Ribosomal RNA large subunit methyltransferase F (308 aa).

Belongs to the methyltransferase superfamily. METTL16/RlmF family.

It is found in the cytoplasm. It catalyses the reaction adenosine(1618) in 23S rRNA + S-adenosyl-L-methionine = N(6)-methyladenosine(1618) in 23S rRNA + S-adenosyl-L-homocysteine + H(+). In terms of biological role, specifically methylates the adenine in position 1618 of 23S rRNA. The chain is Ribosomal RNA large subunit methyltransferase F from Escherichia fergusonii (strain ATCC 35469 / DSM 13698 / CCUG 18766 / IAM 14443 / JCM 21226 / LMG 7866 / NBRC 102419 / NCTC 12128 / CDC 0568-73).